The sequence spans 454 residues: Replicative DNA helicase DnaB (454 aa).

The segment at 1 to 149 (MSELFSERIP…LDEADRKIME (149 aa)) is N-terminal domain (NTD). The tract at residues 163–176 (KDILVQTYDNIEML) is linker helix. In terms of domain architecture, SF4 helicase spans 179 to 445 (RDGEITGIPT…NKFVNLERRF (267 aa)). Residues 183 to 454 (ITGIPTGFTE…FDEAQIPPGA (272 aa)) form a C-terminal domain (CTD) region. ATP is bound by residues Ser213, Gly215, Lys216, Thr217, and Ala218. Catalysis depends on Glu241, which acts as the Nucleophile. ATP is bound by residues Arg250 and Gln362. The ssDNA site is built by Arg381, Glu382, and Gly384. ATP is bound by residues Lys418, Gln419, and Arg420.

The protein belongs to the helicase family. DnaB subfamily. In terms of assembly, homohexamer. Interacts with DnaG primase, as DnaB(6):DnaG(3). Interacts with the N-terminus of DnaI (shown with DnaI of B.subtilis), forms a helicase DnaB(6):DnaI(6) complex. The DnaB-DnaI complex is disrupted by DnaD (DnaD and DnaI from B.subtilis). A stable complex DnaI(6):DnaB(6):DnaG(3) fragment can be isolated; DnaI and DnaG do not contact each other (DnaI in this complex is derived from B.subtilis). Forms a complex with DNA clamp loader protein tau (shown with B.subtilis HolA) tau(3):DnaB(6); a single ATP hydrolysis even is sufficient for complex formation.

The catalysed reaction is Couples ATP hydrolysis with the unwinding of duplex DNA at the replication fork by translocating in the 5'-3' direction. This creates two antiparallel DNA single strands (ssDNA). The leading ssDNA polymer is the template for DNA polymerase III holoenzyme which synthesizes a continuous strand.. The enzyme catalyses ATP + H2O = ADP + phosphate + H(+). In terms of biological role, the main replicative DNA helicase, it participates in initiation and elongation during chromosome replication. Travels ahead of the DNA replisome, separating double-stranded (ds)DNA into templates for DNA synthesis. Binding of single-stranded (ss)DNA to the hexamer suggests a 2-nucleotide step size for the helicase and a hand-over-hand mechanism of DNA unwinding. Has ssDNA-stimulated ATPase activity. DnaG primase stimulates the helicase activity (the helicase direction was not determine but is probably 5'-3'). Loaded onto DNA by helicase loader DnaI (shown with DnaI of B.subtilis); ATP-binding enhances loading and subsequent ATP hydrolysis dissociates the complex, leaving helicase on the DNA. Binds ssDNA and less well dsDNA, in the presence of ADPNP (probably 5'-adenylyl beta, gamma-imidodiphosphate, but not ATP) binding to both DNAs is improved. The chain is Replicative DNA helicase DnaB from Geobacillus stearothermophilus (Bacillus stearothermophilus).